The following is a 773-amino-acid chain: Photosystem I P700 chlorophyll a apoprotein A1 (773 aa).

The tract at residues 1–27 (MTISPPERGEKAKGAAPTPYDQPVDRD) is disordered. 8 helical membrane-spanning segments follow: residues 80-103 (IFSA…FHGA), 166-189 (LMAL…YHYH), 205-229 (LQHH…HIGA), 315-333 (ISHH…GHMW), 375-398 (WHGQ…HHMY), 414-440 (LGLF…IAMI), 462-484 (AIIS…LYIH), and 564-582 (LMIH…LILL). Cys606 and Cys615 together coordinate [4Fe-4S] cluster. 2 helical membrane passes run 622–643 (HVFL…HFSW) and 687–709 (ISMY…MFLF). His698 serves as a coordination point for divinylchlorophyll a'. Divinyl chlorophyll a-binding residues include Met706 and Tyr714. Phylloquinone is bound at residue Trp715. Residues 747 to 767 (AVGVAHFLLGGIATTWAFFHA) traverse the membrane as a helical segment.

Belongs to the PsaA/PsaB family. In terms of assembly, the PsaA/B heterodimer binds the P700 divinyl chlorophyll special pair and subsequent electron acceptors. PSI consists of a core antenna complex that captures photons, and an electron transfer chain that converts photonic excitation into a charge separation. The cyanobacterial PSI reaction center is composed of one copy each of PsaA,B,C,D,E,F,I,J,K,L,M and X, and forms trimeric complexes. PSI electron transfer chain: 5 divinyl chlorophyll a, 1 divinyl chlorophyll a', 2 phylloquinones and 3 4Fe-4S clusters. PSI core antenna: 90 divinyl chlorophyll a, 22 carotenoids, 3 phospholipids and 1 galactolipid. P700 is a divinyl chlorophyll a/divinyl chlorophyll a' dimer, A0 is one or more divinylchlorophyll a, A1 is one or both phylloquinones and FX is a shared 4Fe-4S iron-sulfur center. serves as cofactor.

It localises to the cellular thylakoid membrane. It catalyses the reaction reduced [plastocyanin] + hnu + oxidized [2Fe-2S]-[ferredoxin] = oxidized [plastocyanin] + reduced [2Fe-2S]-[ferredoxin]. PsaA and PsaB bind P700, the primary electron donor of photosystem I (PSI), as well as the electron acceptors A0, A1 and FX. PSI is a plastocyanin/cytochrome c6-ferredoxin oxidoreductase, converting photonic excitation into a charge separation, which transfers an electron from the donor P700 chlorophyll pair to the spectroscopically characterized acceptors A0, A1, FX, FA and FB in turn. Oxidized P700 is reduced on the lumenal side of the thylakoid membrane by plastocyanin or cytochrome c6. This chain is Photosystem I P700 chlorophyll a apoprotein A1, found in Prochlorococcus marinus (strain SARG / CCMP1375 / SS120).